The following is a 252-amino-acid chain: CD99 antigen-like protein 2 (252 aa).

The signal sequence occupies residues 1–23 (MEKTLWTWTLLAVFSLLVVKGMS). Residues 30–170 (DALGDDDDDE…DLDPADDNNY (141 aa)) are disordered. A compositionally biased stretch (low complexity) spans 57–68 (AAVKPTLKPVKP). The span at 96 to 120 (NDIKGKGKDSGKGDKEVGGGSRDDG) shows a compositional bias: basic and acidic residues. The chain crosses the membrane as a helical span at residues 178-198 (TIAGIVSAVAMALVGAVSSYI).

It belongs to the CD99 family.

Its subcellular location is the cell membrane. The protein localises to the cell junction. In terms of biological role, may function as a homophilic adhesion molecule. The chain is CD99 antigen-like protein 2 (cd99l2) from Danio rerio (Zebrafish).